Consider the following 136-residue polypeptide: MARTKQTARKSTGGKAPRKQLATKAARKSAPATGGVKKPHRYRPGTVALREIRRYQKSTELLIRKLPFQRLVREIAQDFKTDLRFQSSAIGALQEASEAYLVSLFEDTNLAAIHAKRVTIQPKDIHLARRLRGERT.

The segment at 1 to 45 (MARTKQTARKSTGGKAPRKQLATKAARKSAPATGGVKKPHRYRPG) is disordered. Lys-5 is subject to N6,N6,N6-trimethyllysine; alternate. Lys-5 is subject to N6,N6-dimethyllysine; alternate. N6-methyllysine; alternate occurs at positions 5 and 10. At Lys-10 the chain carries N6-acetyllysine; alternate. Ser-11 carries the phosphoserine modification. Lys-15 is subject to N6,N6-dimethyllysine; alternate. 5 positions are modified to N6-methyllysine; alternate: Lys-15, Lys-19, Lys-24, Lys-28, and Lys-37. Lys-15, Lys-19, Lys-24, Lys-28, and Lys-37 each carry N6-acetyllysine; alternate. N6,N6,N6-trimethyllysine; alternate occurs at positions 28 and 37. 2 positions are modified to N6,N6-dimethyllysine; alternate: Lys-28 and Lys-37. Residues Lys-57 and Lys-65 each carry the N6-acetyllysine modification. Lys-80 is subject to N6,N6,N6-trimethyllysine; alternate. Position 80 is an N6,N6-dimethyllysine; alternate (Lys-80). The residue at position 80 (Lys-80) is an N6-methyllysine; alternate.

Belongs to the histone H3 family. In terms of assembly, the nucleosome is a histone octamer containing two molecules each of H2A, H2B, H3 and H4 assembled in one H3-H4 heterotetramer and two H2A-H2B heterodimers. The octamer wraps approximately 147 bp of DNA. In terms of processing, phosphorylated to form H3S10ph. H3S10ph promotes subsequent H3K14ac formation and is required for transcriptional activation through TBP recruitment to the promoters. Mono-, di- and trimethylated by the COMPASS complex to form H3K4me1/2/3. H3K4me activates gene expression by regulating transcription elongation and plays a role in telomere length maintenance. H3K4me enrichment correlates with transcription levels, and occurs in a 5' to 3' gradient with H3K4me3 enrichment at the 5'-end of genes, shifting to H3K4me2 and then H3K4me1. Methylated by SET2 to form H3K36me. H3K36me represses gene expression. Methylated by DOT1 to form H3K79me. H3K79me is required for association of SIR proteins with telomeric regions and for telomeric silencing. The COMPASS-mediated formation of H3K4me2/3 and the DOT1-mediated formation of H3K79me require H2BK123ub1. Post-translationally, acetylation of histone H3 leads to transcriptional activation. H3K14ac formation by GCN5 is promoted by H3S10ph. H3K14ac can also be formed by ESA1. H3K56ac formation occurs predominantly in newly synthesized H3 molecules during G1, S and G2/M of the cell cycle and may be involved in DNA repair.

The protein localises to the nucleus. It is found in the chromosome. Its function is as follows. Core component of nucleosome. Nucleosomes wrap and compact DNA into chromatin, limiting DNA accessibility to the cellular machineries which require DNA as a template. Histones thereby play a central role in transcription regulation, DNA repair, DNA replication and chromosomal stability. DNA accessibility is regulated via a complex set of post-translational modifications of histones, also called histone code, and nucleosome remodeling. In Mortierella alpina (Oleaginous fungus), this protein is Histone H3 (H3.1).